The chain runs to 231 residues: Probable glutathione S-transferase GSTU1 (231 aa).

The GST N-terminal domain occupies 5–84; that stretch reads KELVLLDFWV…YLDDAFPGTP (80 aa). Residues Ser15, Lys42, Ile56, and 68-69 contribute to the glutathione site; that span reads ES. Residues 97 to 220 form the GST C-terminal domain; the sequence is AAYARATARF…LPSPEKVYDF (124 aa).

This sequence belongs to the GST superfamily. Tau family.

It carries out the reaction RX + glutathione = an S-substituted glutathione + a halide anion + H(+). Its function is as follows. Conjugation of reduced glutathione to a wide number of exogenous and endogenous hydrophobic electrophiles. The polypeptide is Probable glutathione S-transferase GSTU1 (GSTU1) (Oryza sativa subsp. indica (Rice)).